The chain runs to 1272 residues: AF4/FMR2 family member 2 (1272 aa).

Disordered regions lie at residues 93–183 (IPKN…LTQD) and 200–223 (PQIG…SSGE). Over residues 97–107 (SVPQNPNNKNE) the composition is skewed to polar residues. Residues 151-160 (SKPEWSRDSH) show a composition bias toward basic and acidic residues. The span at 161-183 (NPSTVLASQASGQPNKMQTLTQD) shows a compositional bias: polar residues. The span at 212 to 223 (AKEDSNPKSSGE) shows a compositional bias: basic and acidic residues. Serine 391 is modified (phosphoserine). 4 disordered regions span residues 418 to 491 (KAKP…KWQL), 535 to 687 (TNAS…DQEE), 779 to 829 (SLHA…PEKK), and 842 to 903 (PPCI…QDKN). A compositionally biased stretch (pro residues) spans 426–438 (VNPPLATPQPPPA). Positions 439-452 (VQASGGSGSSSESE) are enriched in low complexity. A Phosphothreonine modification is found at threonine 478. The segment covering 543 to 558 (EPKERPLLSLIREKAR) has biased composition (basic and acidic residues). Over residues 576–586 (STTSETVSQRT) the composition is skewed to polar residues. Positions 616-629 (PKEKESVELHDPPR) are enriched in basic and acidic residues. The segment covering 630 to 640 (GRNKATAHKPA) has biased composition (basic residues). Over residues 818–829 (PTEVAEKIPEKK) the composition is skewed to basic and acidic residues. Pro residues-rich tracts occupy residues 844-853 (CISPAPPHKP) and 874-883 (FPPPLSPLPE).

It belongs to the AF4 family.

The protein resides in the nucleus speckle. In terms of biological role, RNA-binding protein. Might be involved in alternative splicing regulation through an interaction with G-quartet RNA structure. This is AF4/FMR2 family member 2 (AFF2) from Pongo pygmaeus (Bornean orangutan).